A 280-amino-acid chain; its full sequence is Lacto-N-neotetraose biosynthesis glycosyltransferase LgtE (280 aa).

It belongs to the glycosyltransferase 25 family.

It participates in glycan metabolism; lacto-N-neotetraose biosynthesis. Its pathway is bacterial outer membrane biogenesis; lipooligosaccharide biosynthesis. Functionally, adds the first galactose to the lacto-N-tetraose chain in lipooligosaccharide (LOS). The polypeptide is Lacto-N-neotetraose biosynthesis glycosyltransferase LgtE (lgtE) (Neisseria gonorrhoeae).